A 101-amino-acid chain; its full sequence is Urease subunit beta (101 aa).

Belongs to the urease beta subunit family. As to quaternary structure, heterotrimer of UreA (gamma), UreB (beta) and UreC (alpha) subunits. Three heterotrimers associate to form the active enzyme.

It is found in the cytoplasm. The catalysed reaction is urea + 2 H2O + H(+) = hydrogencarbonate + 2 NH4(+). It functions in the pathway nitrogen metabolism; urea degradation; CO(2) and NH(3) from urea (urease route): step 1/1. The protein is Urease subunit beta of Pseudomonas syringae pv. syringae (strain B728a).